Reading from the N-terminus, the 297-residue chain is Tyrosine recombinase XerD (297 aa).

The Core-binding (CB) domain maps to Lys2–Cys86. Residues Gln107–Lys291 form the Tyr recombinase domain. Active-site residues include Arg147, Lys171, His243, Arg246, and His269. The O-(3'-phospho-DNA)-tyrosine intermediate role is filled by Tyr278.

It belongs to the 'phage' integrase family. XerD subfamily. As to quaternary structure, forms a cyclic heterotetrameric complex composed of two molecules of XerC and two molecules of XerD.

Its subcellular location is the cytoplasm. In terms of biological role, site-specific tyrosine recombinase, which acts by catalyzing the cutting and rejoining of the recombining DNA molecules. The XerC-XerD complex is essential to convert dimers of the bacterial chromosome into monomers to permit their segregation at cell division. It also contributes to the segregational stability of plasmids. This Haemophilus ducreyi (strain 35000HP / ATCC 700724) protein is Tyrosine recombinase XerD.